Here is a 216-residue protein sequence, read N- to C-terminus: Ras-related protein Rab-11A (216 aa).

Residue glycine 2 is modified to N-acetylglycine. Residues serine 20, glycine 21, valine 22, glycine 23, lysine 24, serine 25, asparagine 26, asparagine 37, leucine 38, serine 40, serine 42, and threonine 43 each coordinate GTP. Serine 25 contacts Mg(2+). A Switch 1 motif is present at residues 36–47 (FNLESKSTIGVE). Mg(2+) contacts are provided by threonine 43 and aspartate 66. Residues 67 to 86 (TAGQERYRAITSAYYRGAVG) carry the Switch 2 motif. Residues glycine 69, asparagine 124, lysine 125, aspartate 127, alanine 155, and leucine 156 each contribute to the GTP site. The interval 183 to 211 (DRRENDMSPSNNVVPIHVPPTTENKPKVQ) is disordered. 2 S-geranylgeranyl cysteine lipidation sites follow: cysteine 212 and cysteine 213. Cysteine methyl ester is present on cysteine 213. Residues 214–216 (QNI) constitute a propeptide, removed in mature form.

The protein belongs to the small GTPase superfamily. Rab family. Interacts (GTP-bound form) with RAB11FIPs (via their C-termini) including RAB11FIP1, RAB11FIP2, RAB11FIP3, RAB11FIP4 and RAB11FIP5 effectors. Forms a complex with RAB11FIP3 and dynein intermediate chain DYNC1LI1; the interaction between RAB11A1 and RAB11FIP3 is direct; the complex regulates endocytic trafficking. Interacts with EVI5; EVI5 and RAB11FIP3 may be mutually exclusive and compete for binding RAB11A. Interacts with SGSM1, SGSM2, SGSM3 and VIPAS39. Interacts with EXOC6 in a GTP-dependent manner. Interacts with RAB11FIP5. Interacts with STXBP6. Interacts (GDP-bound form) with ZFYVE27. Interacts with BIRC6/bruce. May interact with TBC1D14. Interacts with UNC119; in a cell cycle-dependent manner. GDP-bound and nucleotide-free forms interact with SH3BP5. Interacts (GDP-bound form) with KIF5A in a ZFYVE27-dependent manner. Interacts (GDP-bound form) with RELCH. Found in a complex composed of RELCH, OSBP1 and RAB11A. Interacts with TBC1D12. Interacts with DEF6. Interacts with ATP9A. Forms a heterotetramer with RAB11FIP3; the GTP-bound form is preferred for binding. Forms a complex with Rabin8/RAB3IP and RAB11FIP3, probably a heterohexamer with two of each protein subunit, where Rabin8/RAB3IP and RAB11FIP3 simultaneously bind to RAB11A; the complex promotes preciliary trafficking and cilia growth. Forms a complex containing RAB11A, ASAP1, Rabin8/RAB3IP, RAP11FIP3 and ARF4; the complex promotes preciliary trafficking; the complex binds to RHO in photoreceptor cells and promotes RHO ciliary transport. Interacts (GTP-bound form) with WDR44; the interaction prevents RAB11A-RAB3IP-RAB11FIP3 complex formation. Mg(2+) is required as a cofactor. Detected in various tissues, such as brain, testis, spleen, and heart.

The protein resides in the cell membrane. It is found in the endosome membrane. The protein localises to the recycling endosome membrane. Its subcellular location is the cleavage furrow. It localises to the cytoplasmic vesicle. The protein resides in the phagosome. It is found in the cytoplasmic vesicle membrane. The protein localises to the golgi apparatus. Its subcellular location is the trans-Golgi network. The catalysed reaction is GTP + H2O = GDP + phosphate + H(+). Its activity is regulated as follows. Regulated by guanine nucleotide exchange factors (GEFs) which promote the exchange of bound GDP for free GTP. Regulated by GTPase activating proteins (GAPs) which increase the GTP hydrolysis activity. Inhibited by GDP dissociation inhibitors (GDIs) which prevent Rab-GDP dissociation. Functionally, the small GTPases Rab are key regulators of intracellular membrane trafficking, from the formation of transport vesicles to their fusion with membranes. Rabs cycle between an inactive GDP-bound form and an active GTP-bound form that is able to recruit to membranes different set of downstream effectors directly responsible for vesicle formation, movement, tethering and fusion. The small Rab GTPase RAB11A regulates endocytic recycling. Forms a functional Rab11/RAB11FIP3/dynein complex that regulates the movement of peripheral sorting endosomes (SE) along microtubule tracks toward the microtubule organizing center/centrosome, generating the endosomal recycling compartment (ERC). Acts as a major regulator of membrane delivery during cytokinesis. Together with MYO5B and RAB8A participates in epithelial cell polarization. Together with Rabin8/RAB3IP, RAB8A, the exocyst complex, PARD3, PRKCI, ANXA2, CDC42 and DNMBP promotes transcytosis of PODXL to the apical membrane initiation sites (AMIS), apical surface formation and lumenogenesis. Together with MYO5B participates in CFTR trafficking to the plasma membrane and TF (Transferrin) recycling in nonpolarized cells. Required in a complex with MYO5B and RAB11FIP2 for the transport of NPC1L1 to the plasma membrane. Participates in the sorting and basolateral transport of CDH1 from the Golgi apparatus to the plasma membrane. Regulates the recycling of FCGRT (receptor of Fc region of monomeric IgG) to basolateral membranes. May also play a role in melanosome transport and release from melanocytes. Promotes Rabin8/RAB3IP preciliary vesicular trafficking to mother centriole by forming a ciliary targeting complex containing Rab11, ASAP1, Rabin8/RAB3IP, RAB11FIP3 and ARF4, thereby regulating ciliogenesis initiation. On the contrary, upon LPAR1 receptor signaling pathway activation, interaction with phosphorylated WDR44 prevents Rab11-RAB3IP-RAB11FIP3 complex formation and cilia growth. Participates in the export of a subset of neosynthesized proteins through a Rab8-Rab10-Rab11-endososomal dependent export route via interaction with WDR44. The sequence is that of Ras-related protein Rab-11A from Rattus norvegicus (Rat).